The sequence spans 144 residues: Probable nucleoside diphosphate kinase 5 (144 aa).

ATP is bound by residues K3, F51, R79, T85, R99, and N109. H112 acts as the Pros-phosphohistidine intermediate in catalysis.

Belongs to the NDK family.

The enzyme catalyses a 2'-deoxyribonucleoside 5'-diphosphate + ATP = a 2'-deoxyribonucleoside 5'-triphosphate + ADP. It carries out the reaction a ribonucleoside 5'-diphosphate + ATP = a ribonucleoside 5'-triphosphate + ADP. Functionally, involved in the synthesis of nucleoside triphosphates other than ATP. The ATP gamma phosphate is transferred to the NDP beta phosphate via a ping-pong mechanism, using a phosphorylated active-site intermediate. This Arabidopsis thaliana (Mouse-ear cress) protein is Probable nucleoside diphosphate kinase 5.